Consider the following 174-residue polypeptide: Transcription factor bHLH168 (174 aa).

Residues 14 to 63 (SLREQRNLREKERRMRMKHLFSILSSHVSPTRRLPVPQLIDQAVSYMIQL) enclose the bHLH domain.

Belongs to the bHLH protein family.

It localises to the nucleus. The sequence is that of Transcription factor bHLH168 from Arabidopsis thaliana (Mouse-ear cress).